We begin with the raw amino-acid sequence, 984 residues long: Putative formate dehydrogenase SAV2309 (984 aa).

One can recognise a 2Fe-2S ferredoxin-type domain in the interval 3-79 (EHLVVTLDGK…PMTVNTVNND (77 aa)). [2Fe-2S] cluster contacts are provided by Cys-37, Cys-48, Cys-51, and Cys-63. The 4Fe-4S His(Cys)3-ligated-type domain maps to 79-119 (DVKDAQKEALDRILEKHMLYCTVCDYNNGDCEIHNTMDAWG). [4Fe-4S] cluster is bound by residues His-95, Cys-99, Cys-102, Cys-109, Cys-147, Cys-150, Cys-153, Cys-157, Cys-190, Cys-193, Cys-196, Cys-200, Cys-264, Cys-267, Cys-271, and Cys-299. 4Fe-4S ferredoxin-type domains follow at residues 138–165 (PFYR…VNET) and 181–211 (NDVP…VNME). The interval 252–984 (MRKERIKKTK…YVFPGNQVDK (733 aa)) is formate dehydrogenase. One can recognise a 4Fe-4S Mo/W bis-MGD-type domain in the interval 257 to 313 (IKKTKTVCTYCGVGCSFEVWTKDREILKVQPSHDSPANKIVTCVKGKFSWGHINSDQ).

This sequence in the C-terminal section; belongs to the prokaryotic molybdopterin-containing oxidoreductase family. [2Fe-2S] cluster serves as cofactor. The cofactor is [4Fe-4S] cluster. It depends on Mo-bis(molybdopterin guanine dinucleotide) as a cofactor.

The enzyme catalyses formate + NAD(+) = CO2 + NADH. This is Putative formate dehydrogenase SAV2309 from Staphylococcus aureus (strain Mu50 / ATCC 700699).